We begin with the raw amino-acid sequence, 22 residues long: MICOS complex subunit MIC60 (22 aa).

The protein belongs to the MICOS complex subunit Mic60 family. Component of the mitochondrial contact site and cristae organizing system (MICOS) complex, composed of at least MICOS10/MIC10, CHCHD3/MIC19, CHCHD6/MIC25, APOOL/MIC27, IMMT/MIC60, APOO/MIC23/MIC26 and MICOS13/MIC13. This complex was also known under the names MINOS or MitOS complex. The MICOS complex associates with mitochondrial outer membrane proteins SAMM50, MTX1 and MTX2 (together described as components of the mitochondrial outer membrane sorting assembly machinery (SAM) complex) and DNAJC11, mitochondrial inner membrane protein TMEM11 and with HSPA9. The MICOS and SAM complexes together with DNAJC11 are part of a large protein complex spanning both membranes termed the mitochondrial intermembrane space bridging (MIB) complex. Interacts with HSPA1A/HSPA1B and OPA1, preferentially with the soluble OPA1 form. Interacts with MICOS13/MIC13, MICOS10/MIC10, CHCHD3/MIC19, CHCHD6/MIC25, SAMM50 and TMEM11. Interacts with APOO/MIC23/MIC26 and APOOL/MIC27. Interacts with ARMC1. Interacts with ARMC12.

The protein resides in the mitochondrion inner membrane. It localises to the mitochondrion. Functionally, component of the MICOS complex, a large protein complex of the mitochondrial inner membrane that plays crucial roles in the maintenance of crista junctions, inner membrane architecture, and formation of contact sites to the outer membrane. Plays an important role in the maintenance of the MICOS complex stability and the mitochondrial cristae morphology. This Mesocricetus auratus (Golden hamster) protein is MICOS complex subunit MIC60.